The primary structure comprises 242 residues: Platelet-derived growth factor subunit B (242 aa).

The signal sequence occupies residues 1 to 20; that stretch reads MNRCWALFLSLCCYLRLVSA. A propeptide spans 21-81 (removed in mature form); it reads EGDPIPEELY…ELESLSRGRR (61 aa). The N-linked (GlcNAc...) asparagine glycan is linked to asparagine 63. Disulfide bonds link cysteine 97–cysteine 141, cysteine 130–cysteine 178, and cysteine 134–cysteine 180. Over residues 219-232 the composition is skewed to basic residues; sequence PPKGKHRKFKHTHD. Residues 219-242 form a disordered region; sequence PPKGKHRKFKHTHDKKALKETLGA. Residues 233–242 show a composition bias toward basic and acidic residues; sequence KKALKETLGA.

Belongs to the PDGF/VEGF growth factor family. As to quaternary structure, antiparallel homodimer; disulfide-linked. Antiparallel heterodimer with PDGFA; disulfide-linked. The PDGFB homodimer interacts with PDGFRA and PDGFRB homodimers, and with heterodimers formed by PDGFRA and PDGFRB. The heterodimer composed of PDGFA and PDGFB interacts with PDGFRB homodimers, and with heterodimers formed by PDGFRA and PDGFRB. Interacts with XLKD1. Interacts with LRP1. Interacts with SORL1 (via the N-terminal ectodomain). Interacts with CD82; this interaction inhibits PDGFB-mediated signaling pathway.

It localises to the secreted. Functionally, growth factor that plays an essential role in the regulation of embryonic development, cell proliferation, cell migration, survival and chemotaxis. Potent mitogen for cells of mesenchymal origin. Required for normal proliferation and recruitment of pericytes and vascular smooth muscle cells in the central nervous system, skin, lung, heart and placenta. Required for normal blood vessel development, and for normal development of kidney glomeruli. Plays an important role in wound healing. Signaling is modulated by the formation of heterodimers with PDGFA. This chain is Platelet-derived growth factor subunit B (PDGFB), found in Canis lupus familiaris (Dog).